The following is a 283-amino-acid chain: Elongation factor Ts (283 aa).

Residues 80–83 are involved in Mg(2+) ion dislocation from EF-Tu; the sequence is TDFV.

The protein belongs to the EF-Ts family.

The protein localises to the cytoplasm. Its function is as follows. Associates with the EF-Tu.GDP complex and induces the exchange of GDP to GTP. It remains bound to the aminoacyl-tRNA.EF-Tu.GTP complex up to the GTP hydrolysis stage on the ribosome. The polypeptide is Elongation factor Ts (Salmonella choleraesuis (strain SC-B67)).